Here is a 186-residue protein sequence, read N- to C-terminus: Elongation factor P (186 aa).

The protein belongs to the elongation factor P family.

It localises to the cytoplasm. It participates in protein biosynthesis; polypeptide chain elongation. In terms of biological role, involved in peptide bond synthesis. Stimulates efficient translation and peptide-bond synthesis on native or reconstituted 70S ribosomes in vitro. Probably functions indirectly by altering the affinity of the ribosome for aminoacyl-tRNA, thus increasing their reactivity as acceptors for peptidyl transferase. In Prochlorococcus marinus (strain MIT 9211), this protein is Elongation factor P.